A 521-amino-acid polypeptide reads, in one-letter code: Serine/threonine-protein kinase A (521 aa).

Positions Tyr15–Ile289 constitute a Protein kinase domain. ATP contacts are provided by residues Val21–Val29 and Lys45. Catalysis depends on Asp148, which acts as the Proton acceptor.

This sequence belongs to the protein kinase superfamily. Ser/Thr protein kinase family. In terms of processing, autophosphorylated.

The catalysed reaction is L-seryl-[protein] + ATP = O-phospho-L-seryl-[protein] + ADP + H(+). It carries out the reaction L-threonyl-[protein] + ATP = O-phospho-L-threonyl-[protein] + ADP + H(+). In terms of biological role, protein kinase that regulates cellular motility via phosphorylation of membrane proteins. The polypeptide is Serine/threonine-protein kinase A (spkA) (Synechocystis sp. (strain ATCC 27184 / PCC 6803 / Kazusa)).